A 524-amino-acid chain; its full sequence is Zinc finger protein GLIS2 (524 aa).

The interaction with CTNND1 stretch occupies residues 35 to 174; it reads ALHRELGLVD…PKQLVCRWAK (140 aa). Disordered stretches follow at residues 39–62 and 84–114; these read ELGL…FLLN and SPPS…VPSA. The segment at 71–137 is transcription activation; the sequence is GRFSAAPLVD…SSFQFFLPLG (67 aa). Positions 84–100 are enriched in low complexity; the sequence is SPPSGLDSPNGSSSLSP. Positions 148-171 are transcription repression; the sequence is SFLTPPKDKCLSPDLPLPKQLVCR. Residues 168–193 form a C2H2-type 1 zinc finger; sequence LVCRWAKCNQLFELLQDLVDHVNDYH. Residues 202 to 229 form a C2H2-type 2; atypical zinc finger; it reads YCCHWEGCARHGRGFNARYKMLIHIRTH. 3 C2H2-type zinc fingers span residues 235 to 257, 263 to 287, and 293 to 317; these read HRCP…NRSH, YVCP…TRTH, and YYCK…IKAH. Residues 439-480 are disordered; the sequence is GGKAEGEKGRGSVPTRALGMEGHKTPLERTESSCSRPSPDGL. The segment covering 459–469 has biased composition (basic and acidic residues); sequence EGHKTPLERTE.

The protein belongs to the GLI C2H2-type zinc-finger protein family. As to quaternary structure, interacts with CTBP1 and HDAC3. Interacts with CTNNB1. Interacts with SUFU. Interacts with CTNND1. Post-translationally, C-terminus cleavage is induced by interaction with CTNND1 and enhanced by Src tyrosine kinase. In terms of tissue distribution, expressed at high levels in kidney and at low levels in heart, lung and placenta. Expressed in colon.

The protein resides in the nucleus speckle. The protein localises to the cytoplasm. In terms of biological role, can act either as a transcriptional repressor or as a transcriptional activator, depending on the cell context. Acts as a repressor of the Hedgehog signaling pathway. Represses the Hedgehog-dependent expression of Wnt4. Necessary to maintain the differentiated epithelial phenotype in renal cells through the inhibition of SNAI1, which itself induces the epithelial-to-mesenchymal transition. Represses transcriptional activation mediated by CTNNB1 in the Wnt signaling pathway. May act by recruiting the corepressors CTBP1 and HDAC3. May be involved in neuron differentiation. This chain is Zinc finger protein GLIS2 (GLIS2), found in Homo sapiens (Human).